The following is a 557-amino-acid chain: (-)-germacrene D synthase (557 aa).

Mg(2+) contacts are provided by Asp310, Asp314, and Glu462. Positions 310–314 (DDIYD) match the DDXXD motif motif.

This sequence belongs to the terpene synthase family. Tpsa subfamily. Mg(2+) serves as cofactor. Expressed in flowers. Detected in stems, young leaves and tendrils.

The protein resides in the cytoplasm. It carries out the reaction (2E,6E)-farnesyl diphosphate + H2O = (1E,4S,5E,7R)-germacra-1(10),5-dien-11-ol + diphosphate. The catalysed reaction is (2E,6E)-farnesyl diphosphate = (-)-germacrene D + diphosphate. It functions in the pathway secondary metabolite biosynthesis; terpenoid biosynthesis. Its function is as follows. Involved in the biosynthesis of germacrene D. Can use farnesyl diphosphate as substrate, but not geranyl diphosphate or geranylgeranyl diphosphate. Produces mainly (-)-germacrene D along with gamma-cadinene. The polypeptide is (-)-germacrene D synthase (Vitis vinifera (Grape)).